The following is a 289-amino-acid chain: MPSKEGSGCRRWCFTLNNPTDGEIEFVRSLGPDEFYYAIVGREKGEQGTPHLQGYFHFKNKKRLSALKKLLPRAHFERAKGSDADNEKYCSKEGDVILTLGIVARDGHRAFDGAVAAVMSGRKMKEVAREFPEVYVRHGRGLHNLSLLVGSSPRDFKTEVDVIYGPPGCGKSRWANEQPGTKYYKMRGEWWDGYDGEDVVVLDDFYGWLPYCEMLRLCDRYPHKVPVKGAFVEFTSKRIIITSNKPPETWYKEDCDPKPLFRRFTRVWWYNVDKLEQVRPDFLAHPINY.

The Nuclear localization signal motif lies at 4 to 13 (KEGSGCRRWC). In terms of domain architecture, CRESS-DNA virus Rep endonuclease spans 6-103 (GSGCRRWCFT…GDVILTLGIV (98 aa)). The RCR-1 signature appears at 13–16 (CFTL). Positions 43 and 51 each coordinate a divalent metal cation. The short motif at 51-53 (HLQ) is the RCR-2 element. Residues 60 to 80 (NKKRLSALKKLLPRAHFERAK) carry the Nuclear localization signal motif. Catalysis depends on Tyr89, which acts as the For DNA cleavage activity. The short motif at 89–92 (YCSK) is the RCR-3 element. Glu93 provides a ligand contact to a divalent metal cation. 165–172 (GPPGCGKS) is an ATP binding site.

Belongs to the nanoviruses/circoviruses replication-associated protein family. Interacts with the capsid protein; this interaction relocates Rep into the nucleus. Mg(2+) serves as cofactor. The cofactor is Mn(2+).

It localises to the host nucleus. The enzyme catalyses ATP + H2O = ADP + phosphate + H(+). In terms of biological role, essential for the replication of viral ssDNA. The closed circular ssDNA genome is first converted to a superhelical dsDNA. Rep and/or Rep' binds a specific hairpin at the genome origin of replication. Introduces an endonucleolytic nick within the conserved sequence 5'-AGTATTAC-3' in the intergenic region of the genome, thereby initiating the rolling circle replication (RCR). Following cleavage, binds covalently to the 5'-phosphate of DNA as a tyrosyl ester. The cleavage gives rise to a free 3'-OH that serves as a primer for the cellular DNA polymerase. The polymerase synthesizes the (+) strand DNA by rolling circle mechanism. After one round of replication, a Rep-catalyzed nucleotidyl transfer reaction releases a circular single-stranded virus genome, thereby terminating the replication. Displays origin-specific DNA cleavage, nucleotidyl transferase, ATPase and helicase activities. ATPase activity is probably carried by the isoform Rep. In Gracula (BFDV), this protein is Replication-associated protein (Rep).